The following is a 99-amino-acid chain: Aspartyl/glutamyl-tRNA(Asn/Gln) amidotransferase subunit C (99 aa).

The protein belongs to the GatC family. As to quaternary structure, heterotrimer of A, B and C subunits.

The catalysed reaction is L-glutamyl-tRNA(Gln) + L-glutamine + ATP + H2O = L-glutaminyl-tRNA(Gln) + L-glutamate + ADP + phosphate + H(+). The enzyme catalyses L-aspartyl-tRNA(Asn) + L-glutamine + ATP + H2O = L-asparaginyl-tRNA(Asn) + L-glutamate + ADP + phosphate + 2 H(+). Allows the formation of correctly charged Asn-tRNA(Asn) or Gln-tRNA(Gln) through the transamidation of misacylated Asp-tRNA(Asn) or Glu-tRNA(Gln) in organisms which lack either or both of asparaginyl-tRNA or glutaminyl-tRNA synthetases. The reaction takes place in the presence of glutamine and ATP through an activated phospho-Asp-tRNA(Asn) or phospho-Glu-tRNA(Gln). This is Aspartyl/glutamyl-tRNA(Asn/Gln) amidotransferase subunit C from Leptothrix cholodnii (strain ATCC 51168 / LMG 8142 / SP-6) (Leptothrix discophora (strain SP-6)).